Reading from the N-terminus, the 477-residue chain is Xylose isomerase (477 aa).

His142 is a catalytic residue. Mn(2+)-binding residues include Glu273, Glu309, His312, Asp337, Asp348, Asp350, and Asp380.

The protein belongs to the xylose isomerase family. It depends on Mn(2+) as a cofactor.

It catalyses the reaction alpha-D-xylose = alpha-D-xylulofuranose. This Arabidopsis thaliana (Mouse-ear cress) protein is Xylose isomerase (XYLA).